Reading from the N-terminus, the 318-residue chain is MVASISPYYGVSFLEFFLVFFSRLFSGKLFYDHLYIDDIQVIVFFAIAVSCSVVGTFLVLKKMAMYANVVSHTILFGLVCVCLFTHQLIHLSMQALTIAAVSTTLLTGASIHFIRNVFKVAEEASTALVFSLLFSASLLLLVFLTRNAHVGTELVIGNADALAKTDILPIFLVLLINLGISYCFFSSFVCVSFDTIFAFSLGIRIRLVDYLIMLLLSASIVGAFKAVGVLMSLAFLLIPGLIAKLIASSVQEMMVYSMVFGGLAALIAPALSRSILSIYGIGLSTSGLAVGLLLVFYVVMLVFVCSKRAIMLRQKLDK.

10 helical membrane passes run 1-21 (MVASISPYYGVSFLEFFLVFF), 39-59 (IQVIVFFAIAVSCSVVGTFLV), 64-84 (AMYANVVSHTILFGLVCVCLF), 94-114 (QALTIAAVSTTLLTGASIHFI), 124-144 (ASTALVFSLLFSASLLLLVFL), 170-190 (IFLVLLINLGISYCFFSSFVC), 196-216 (IFAFSLGIRIRLVDYLIMLLL), 226-246 (AVGVLMSLAFLLIPGLIAKLI), 252-272 (EMMVYSMVFGGLAALIAPALS), and 285-305 (TSGLAVGLLLVFYVVMLVFVC).

The protein belongs to the ABC-3 integral membrane protein family.

The protein localises to the cell inner membrane. Functionally, part of an ATP-driven transport system CT_067/CT_068/CT_069/CT_070 for a metal. The sequence is that of Probable metal transport system membrane protein CT_070 from Chlamydia trachomatis serovar D (strain ATCC VR-885 / DSM 19411 / UW-3/Cx).